We begin with the raw amino-acid sequence, 379 residues long: Cytochrome b (379 aa).

4 consecutive transmembrane segments (helical) span residues 34 to 54 (FGSLLGICLITQILTGLLLAM), 78 to 99 (WLIRNLHANGASFFFICIYLHI), 114 to 134 (WNTGVILLLTLMATAFVGYVL), and 179 to 199 (FFALHFLLPFLIAGITIIHLT). Residues His84 and His98 each coordinate heme b. His183 and His197 together coordinate heme b. Position 202 (His202) interacts with a ubiquinone. 4 helical membrane passes run 227 to 247 (LKDILGFTLMFIPLLILAFFS), 289 to 309 (LGGVLALAASVLILFLIPFLH), 321 to 341 (LSQMLFWLLVANLLILTWIGS), and 348 to 368 (FIIIGQTASFTYFLILLILFP).

The protein belongs to the cytochrome b family. The cytochrome bc1 complex contains 11 subunits: 3 respiratory subunits (MT-CYB, CYC1 and UQCRFS1), 2 core proteins (UQCRC1 and UQCRC2) and 6 low-molecular weight proteins (UQCRH/QCR6, UQCRB/QCR7, UQCRQ/QCR8, UQCR10/QCR9, UQCR11/QCR10 and a cleavage product of UQCRFS1). This cytochrome bc1 complex then forms a dimer. It depends on heme b as a cofactor.

It is found in the mitochondrion inner membrane. Functionally, component of the ubiquinol-cytochrome c reductase complex (complex III or cytochrome b-c1 complex) that is part of the mitochondrial respiratory chain. The b-c1 complex mediates electron transfer from ubiquinol to cytochrome c. Contributes to the generation of a proton gradient across the mitochondrial membrane that is then used for ATP synthesis. The sequence is that of Cytochrome b (MT-CYB) from Dromaius novaehollandiae (Emu).